Here is a 251-residue protein sequence, read N- to C-terminus: Triosephosphate isomerase (251 aa).

Residue 9-11 (NWK) participates in substrate binding. The Electrophile role is filled by His-95. Glu-167 functions as the Proton acceptor in the catalytic mechanism. Substrate-binding positions include Gly-173, Ser-213, and 234-235 (GG).

The protein belongs to the triosephosphate isomerase family. Homodimer.

Its subcellular location is the cytoplasm. The catalysed reaction is D-glyceraldehyde 3-phosphate = dihydroxyacetone phosphate. It functions in the pathway carbohydrate biosynthesis; gluconeogenesis. Its pathway is carbohydrate degradation; glycolysis; D-glyceraldehyde 3-phosphate from glycerone phosphate: step 1/1. In terms of biological role, involved in the gluconeogenesis. Catalyzes stereospecifically the conversion of dihydroxyacetone phosphate (DHAP) to D-glyceraldehyde-3-phosphate (G3P). In Fusobacterium nucleatum subsp. nucleatum (strain ATCC 25586 / DSM 15643 / BCRC 10681 / CIP 101130 / JCM 8532 / KCTC 2640 / LMG 13131 / VPI 4355), this protein is Triosephosphate isomerase.